A 110-amino-acid polypeptide reads, in one-letter code: Acid stress chaperone HdeA (110 aa).

The N-terminal stretch at 1-21 (MKKVLGVILGGLLLLPVVSNA) is a signal peptide. A disulfide bond links Cys39 and Cys87.

It belongs to the HdeA family.

It is found in the periplasm. Functionally, required for optimal acid stress protection. Exhibits a chaperone-like activity only at low pH by suppressing non-specifically the aggregation of denaturated periplasmic proteins. This chain is Acid stress chaperone HdeA, found in Escherichia coli O157:H7.